The sequence spans 368 residues: Histidinol-phosphate aminotransferase (368 aa).

K215 is modified (N6-(pyridoxal phosphate)lysine).

This sequence belongs to the class-II pyridoxal-phosphate-dependent aminotransferase family. Histidinol-phosphate aminotransferase subfamily. As to quaternary structure, homodimer. Requires pyridoxal 5'-phosphate as cofactor.

The enzyme catalyses L-histidinol phosphate + 2-oxoglutarate = 3-(imidazol-4-yl)-2-oxopropyl phosphate + L-glutamate. The protein operates within amino-acid biosynthesis; L-histidine biosynthesis; L-histidine from 5-phospho-alpha-D-ribose 1-diphosphate: step 7/9. In Buchnera aphidicola subsp. Acyrthosiphon pisum (strain 5A), this protein is Histidinol-phosphate aminotransferase.